The following is a 77-amino-acid chain: Acyl carrier protein (77 aa).

The region spanning A2–Q77 is the Carrier domain. Position 37 is an O-(pantetheine 4'-phosphoryl)serine (S37).

It belongs to the acyl carrier protein (ACP) family. In terms of processing, 4'-phosphopantetheine is transferred from CoA to a specific serine of apo-ACP by AcpS. This modification is essential for activity because fatty acids are bound in thioester linkage to the sulfhydryl of the prosthetic group.

It localises to the cytoplasm. It functions in the pathway lipid metabolism; fatty acid biosynthesis. Its function is as follows. Carrier of the growing fatty acid chain in fatty acid biosynthesis. The chain is Acyl carrier protein from Halalkalibacterium halodurans (strain ATCC BAA-125 / DSM 18197 / FERM 7344 / JCM 9153 / C-125) (Bacillus halodurans).